Here is a 135-residue protein sequence, read N- to C-terminus: MIKLLRSYCLYFAWLVSCIGTLMSVYYSYLLNVEPCVLCYYQRICLFPLVVILGISAYLDDLSVKIYALPLALIGFCIAIYQVCLQEIPGMTLDICGKVSCSTKLFLLGFITMPMASALAFFAIANLLIFATKSE.

A helical transmembrane segment spans residues 7–26 (SYCLYFAWLVSCIGTLMSVY). A disulfide bond links cysteine 36 and cysteine 39. The next 2 helical transmembrane spans lie at 41–60 (YQRICLFPLVVILGISAYLD) and 67–84 (YALPLALIGFCIAIYQVC). A disulfide bridge connects residues cysteine 96 and cysteine 101. A helical transmembrane segment spans residues 109 to 131 (GFITMPMASALAFFAIANLLIFA).

This sequence belongs to the DsbB family. BdbC subfamily.

The protein localises to the cell inner membrane. Its function is as follows. Required for disulfide bond formation in some proteins. The protein is Probable disulfide formation protein of Chlamydia muridarum (strain MoPn / Nigg).